A 183-amino-acid chain; its full sequence is MAMNTETLSLIKQSIKTIPNYPKEGILFRDVTSLLENAVAYKATIDLLVEQYRNKGFTKIVGTEARGFLFGAPLALELGIGFVPVRKPGKLPRATISQSYELEYGHDSLEIHTDAITANDKVLVVDDLLATGGTIEATVKLIRQLGGEVQDAAFVISLPDLGGEARLTALGLELVKLCEFEGE.

Belongs to the purine/pyrimidine phosphoribosyltransferase family. Homodimer.

Its subcellular location is the cytoplasm. The catalysed reaction is AMP + diphosphate = 5-phospho-alpha-D-ribose 1-diphosphate + adenine. Its pathway is purine metabolism; AMP biosynthesis via salvage pathway; AMP from adenine: step 1/1. Catalyzes a salvage reaction resulting in the formation of AMP, that is energically less costly than de novo synthesis. This is Adenine phosphoribosyltransferase from Shewanella sp. (strain MR-7).